Consider the following 402-residue polypeptide: Protein lag-2 (402 aa).

The first 15 residues, Met-1–Leu-15, serve as a signal peptide directing secretion. The Extracellular portion of the chain corresponds to Gln-16–Ile-279. Asn-72 and Asn-105 each carry an N-linked (GlcNAc...) asparagine glycan. The 45-residue stretch at Val-122 to Cys-166 folds into the DSL domain. 9 disulfide bridges follow: Cys-124–Cys-133, Cys-137–Cys-149, Cys-157–Cys-166, Cys-175–Cys-183, Cys-177–Cys-204, Cys-206–Cys-215, Cys-233–Cys-245, Cys-239–Cys-254, and Cys-256–Cys-265. 2 EGF-like domains span residues Asp-171–Glu-216 and Arg-229–Glu-266. Asn-194 carries an N-linked (GlcNAc...) asparagine glycan. The helical transmembrane segment at Thr-280 to Cys-306 threads the bilayer. Over Phe-307–Val-402 the chain is Cytoplasmic.

In terms of assembly, may interact with lin-12 / Notch receptor. In terms of tissue distribution, expressed in the gonad distal tip cell (DTC) of hermaphrodites.

Its subcellular location is the cell membrane. Probable ligand for lin-12/Notch and glp-1/Notch receptors and involved in the mediation of Notch signaling. Involved in the lin-12/Notch pathway signaling of cell fate in vulval precursor cells (VPCs) and in the postembryonic mesodermal lineage (M lineage), acting redundantly with dsl-1 and apx-1. Functions in uterine cells to promote basement membrane mobility during tissue remodeling. Required for oocyte growth control, acting redundantly with apx-1, perhaps signaling via the glp-1/Notch pathway. Plays a role in Notch-dependent induction of left-right asymmetry in interneurons and motoneurons. Involved in maintaining the developmentally arrested larval state known as dauer, probably signaling in the glp-1/Notch pathway. Required for normal sleep bout quantity and arousal thresholds during the transition from the last larval stage to adulthood in well-fed animals. This chain is Protein lag-2, found in Caenorhabditis elegans.